Reading from the N-terminus, the 328-residue chain is UPF0421 protein SAR1980 (328 aa).

4 consecutive transmembrane segments (helical) span residues 19–39 (IAIFLTAVFCMALDLTPIYAI), 61–81 (LPATVIGAGFAVLFTYLFGDQ), 108–128 (VAVLTSLAMIPGIHDAYIFNF), and 132–152 (TLTAIIGLVTSGLINFMVFPP).

The protein belongs to the UPF0421 family.

The protein resides in the cell membrane. The polypeptide is UPF0421 protein SAR1980 (Staphylococcus aureus (strain MRSA252)).